The following is a 270-amino-acid chain: SPbeta prophage-derived DNA ligase-like protein LigB (270 aa).

The active-site N6-AMP-lysine intermediate is lysine 25.

The protein belongs to the ATP-dependent DNA ligase family.

The protein is SPbeta prophage-derived DNA ligase-like protein LigB (ligB) of Bacillus subtilis (strain 168).